The sequence spans 213 residues: uncharacterized protein (213 aa).

This is an uncharacterized protein from Homo sapiens (Human).